Reading from the N-terminus, the 202-residue chain is Putative chromophore lyase CpcV (202 aa).

Belongs to the CpcS/CpeS biliprotein lyase family.

Functionally, covalently attaches a chromophore to Cys residue(s) of phycobiliproteins. This is Putative chromophore lyase CpcV (cpcV) from Picosynechococcus sp. (strain ATCC 27264 / PCC 7002 / PR-6) (Agmenellum quadruplicatum).